The following is a 270-amino-acid chain: Methylthioribulose-1-phosphate dehydratase (270 aa).

Cys-122 serves as a coordination point for substrate. Residues His-140 and His-142 each contribute to the Zn(2+) site. Glu-165 functions as the Proton donor/acceptor in the catalytic mechanism. Residue His-230 coordinates Zn(2+).

It belongs to the aldolase class II family. MtnB subfamily. Zn(2+) serves as cofactor.

The protein localises to the cytoplasm. The catalysed reaction is 5-(methylsulfanyl)-D-ribulose 1-phosphate = 5-methylsulfanyl-2,3-dioxopentyl phosphate + H2O. The protein operates within amino-acid biosynthesis; L-methionine biosynthesis via salvage pathway; L-methionine from S-methyl-5-thio-alpha-D-ribose 1-phosphate: step 2/6. In terms of biological role, catalyzes the dehydration of methylthioribulose-1-phosphate (MTRu-1-P) into 2,3-diketo-5-methylthiopentyl-1-phosphate (DK-MTP-1-P). This Candida albicans (strain WO-1) (Yeast) protein is Methylthioribulose-1-phosphate dehydratase.